The sequence spans 350 residues: uncharacterized protein (350 aa).

The Mn(2+) site is built by D214, D225, H289, E318, and E332.

Belongs to the peptidase M24B family. The cofactor is Mn(2+).

This is an uncharacterized protein from Staphylococcus saprophyticus subsp. saprophyticus (strain ATCC 15305 / DSM 20229 / NCIMB 8711 / NCTC 7292 / S-41).